Here is a 30-residue protein sequence, read N- to C-terminus: Platelet factor 4 (30 aa).

The protein belongs to the intercrine alpha (chemokine CxC) family. As to quaternary structure, homotetramer. Interacts with TNFAIP6 (via Link domain). Interacts with CCR1. Interacts with CXCR3. Binds non-covalently to a proteoglycan molecule.

Its subcellular location is the secreted. In terms of biological role, chemokine released during platelet aggregation that plays a role in different biological processes including hematopoiesis, cell proliferation, differentiation, and activation. Acts via different functional receptors including CCR1, CXCR3A or CXCR3B. Upon interaction with CXCR3A receptor, induces activated T-lymphocytes migration mediated via downstream Ras/extracellular signal-regulated kinase (ERK) signaling. Neutralizes the anticoagulant effect of heparin by binding more strongly to heparin than to the chondroitin-4-sulfate chains of the carrier molecule. Plays a role in the inhibition of hematopoiesis and in the maintenance of hematopoietic stem cell (HSC) quiescence. Chemotactic for neutrophils and monocytes via CCR1. Inhibits endothelial cell proliferation. In cooperation with toll-like receptor 8/TLR8, induces chromatin remodeling and activates inflammatory gene expression via the TBK1-IRF5 axis. In addition, induces myofibroblast differentiation and collagen synthesis in different precursor cells, including endothelial cells, by stimulating endothelial-to-mesenchymal transition. This is Platelet factor 4 (PF4) from Oryctolagus cuniculus (Rabbit).